The sequence spans 83 residues: Carboxysome shell vertex protein CsoS4A (83 aa).

The 78-residue stretch at 1–78 (MKIMQVEKTL…SDLTIIGIID (78 aa)) folds into the BMV domain.

This sequence belongs to the CcmL/EutN family. CsoS4 subfamily. As to quaternary structure, homopentamer.

Its subcellular location is the carboxysome. In terms of biological role, probably forms vertices in the carboxysome, a polyhedral inclusion where RuBisCO (ribulose bisphosphate carboxylase, cbbL-cbbS) is sequestered. Has been modeled to induce curvature upon insertion into an otherwise flat hexagonal layer of major carboxysome subunits. A minor shell protein, only 12 pentamers of CsoS4A/CsoS4B are calculated to be present in each carboxysome. The 2 CsoS4 proteins contribute to the impermeability of the carboxysome to CO(2). Its function is as follows. Unlike beta-carboxysomes, alpha-carboxysomes (Cb) can form without cargo protein. CsoS2 is essential for Cb formation and is also capable of targeting foreign proteins to the Cb. The Cb shell assembles with the aid of CsoS2; CsoS1A, CsoS1B and CsoS1C form the majority of the shell while CsoS4A and CsoS4B form vertices. CsoS1D forms pseudohexamers that probably control metabolite flux into and out of the shell. This is Carboxysome shell vertex protein CsoS4A from Halothiobacillus neapolitanus (strain ATCC 23641 / c2) (Thiobacillus neapolitanus).